Reading from the N-terminus, the 292-residue chain is Diaminopimelate epimerase (292 aa).

Residues N13, Q46, and N66 each contribute to the substrate site. The active-site Proton donor is the C75. Substrate is bound by residues 76-77, N166, N199, and 217-218; these read GN and ER. C226 serves as the catalytic Proton acceptor. Residue 227–228 participates in substrate binding; sequence GT.

This sequence belongs to the diaminopimelate epimerase family. As to quaternary structure, homodimer.

The protein resides in the cytoplasm. It carries out the reaction (2S,6S)-2,6-diaminopimelate = meso-2,6-diaminopimelate. It participates in amino-acid biosynthesis; L-lysine biosynthesis via DAP pathway; DL-2,6-diaminopimelate from LL-2,6-diaminopimelate: step 1/1. Its function is as follows. Catalyzes the stereoinversion of LL-2,6-diaminopimelate (L,L-DAP) to meso-diaminopimelate (meso-DAP), a precursor of L-lysine and an essential component of the bacterial peptidoglycan. The protein is Diaminopimelate epimerase of Ralstonia nicotianae (strain ATCC BAA-1114 / GMI1000) (Ralstonia solanacearum).